Reading from the N-terminus, the 250-residue chain is Doublesex- and mab-3-related transcription factor dmd-3 (250 aa).

The DM 1 DNA-binding region spans 19–68 (CQRCLNHGLREKRKNHKLSCTFRFCQCSNCIMVERRRQLNSRLMQIDGSR). Over residues 90–100 (CTSQSETTNES) the composition is skewed to polar residues. The interval 90-115 (CTSQSETTNESSGEDKDDGKPKERRP) is disordered. Residues 102–115 (GEDKDDGKPKERRP) show a composition bias toward basic and acidic residues. The DM 2 DNA-binding region spans 117–164 (CQRCAQHSVVNRLKGHKRACPFRDCFCAKCQVVVERQKLMADQIKLRR). The disordered stretch occupies residues 166-201 (QKREKNNLNSEREAPIAHSMTPSPIDTVTTTTTPTS). Residues 169–180 (EKNNLNSEREAP) show a composition bias toward basic and acidic residues. Residues 186 to 201 (TPSPIDTVTTTTTPTS) show a composition bias toward low complexity.

It belongs to the DMRT family. In males, expressed in the tail tip. Specifically, expressed in 15 male-specific muscles of the tail tip called the diagonal muscles, and also in core body muscles of both males and hermaphrodites. In males, expressed in ray A-neurons. In males, expressed in PHC sensory neurons. In males, it is also expressed in the hindgut, B lineage and somatic gonad. In hermaphrodites, expressed in the anchor cell only.

Its subcellular location is the nucleus. The protein resides in the perikaryon. Its function is as follows. Transcriptional activator which promotes male-specific development. Acts partially redundantly with the transcription factor mab-3 to coordinate tail tip cell fusion and retraction and thereby regulate male tail tip morphogenesis. This is most likely through the regulation of downstream effectors such as eff-1. May also negatively regulate the expression of other proteins implicated in male tail morphogenesis including nhr-25, vav-1 and arl-1 in tail tip cells. In males, plays a role in the development of ray A-neurons by negatively regulating the activity of the transcription factor ast-1. Plays a role in the male-specific differentiation of PHC sensory neurons into densely connected hub sensory neurons. Plays a role in male mating behavior. This chain is Doublesex- and mab-3-related transcription factor dmd-3, found in Caenorhabditis elegans.